The primary structure comprises 121 residues: Oxalate-binding protein (121 aa).

The Cupin type-2 domain occupies 49–117 (RMKLPPGSSV…GNTDLEFLAV (69 aa)). Mn(2+) contacts are provided by H61, H63, and E68. Y70 contributes to the oxalate binding site. H102 is a Mn(2+) binding site.

Homodimer.

Functionally, binds oxalate. The chain is Oxalate-binding protein from Thermotoga maritima (strain ATCC 43589 / DSM 3109 / JCM 10099 / NBRC 100826 / MSB8).